Reading from the N-terminus, the 830-residue chain is Heavy metal tolerance protein (830 aa).

The first 27 residues, 1–27, serve as a signal peptide directing secretion; that stretch reads MVLRYNSPRLNILELVLLYVGFFSIGS. 3 helical membrane-spanning segments follow: residues 51–71, 88–108, and 126–146; these read PIGI…VDIS, TTVV…ISCA, and LSVL…IVYS. N-linked (GlcNAc...) asparagine glycosylation is present at N150. 3 helical membrane passes run 156–176, 263–283, and 304–324; these read IVLA…AIYL, FQIF…ILAP, and DVIL…IGSL. The ABC transmembrane type-1 domain occupies 265-550; it reads IFICIVLLFL…FGTLYRSLQN (286 aa). N350 carries N-linked (GlcNAc...) asparagine glycosylation. Transmembrane regions (helical) follow at residues 381–401 and 403–423; these read VVFQ…YFFI and FDIY…YVTV. Glutathione is bound by residues 429-433, 492-495, and G542; these read RTEAR and NIVQ. The helical transmembrane segment at 490–511 threads the bilayer; that stretch reads FLNIVQGGIFTFSLAIACLLSA. Residues 584–818 form the ABC transporter domain; the sequence is VIFSHVSFAY…DGGAYKKMWF (235 aa). ATP is bound by residues Y593 and 617–628; that span reads GESGGGKSTIMR.

This sequence belongs to the ABC transporter superfamily. ABCB family. Heavy Metal importer (TC 3.A.1.210) subfamily.

The protein resides in the vacuole membrane. In terms of biological role, involved in metal tolerance. Probably involved in the transport of metal-bound phytochelatins. Compartmentalizes cadmium within vacuoles, thereby protecting cells from cadmium toxicity. This is Heavy metal tolerance protein (hmt1) from Schizosaccharomyces pombe (strain 972 / ATCC 24843) (Fission yeast).